A 148-amino-acid chain; its full sequence is Large ribosomal subunit protein uL13 (148 aa).

The protein belongs to the universal ribosomal protein uL13 family. In terms of assembly, part of the 50S ribosomal subunit.

This protein is one of the early assembly proteins of the 50S ribosomal subunit, although it is not seen to bind rRNA by itself. It is important during the early stages of 50S assembly. This Ureaplasma urealyticum serovar 10 (strain ATCC 33699 / Western) protein is Large ribosomal subunit protein uL13.